Consider the following 452-residue polypeptide: tRNA pseudouridine synthase Pus10 (452 aa).

Positions 71–200 (EMLRALAPSC…DGHVEIQIQP (130 aa)) constitute a THUMP domain. Asp-269 (nucleophile) is an active-site residue. Residues Tyr-335 and Tyr-406 each coordinate substrate.

It belongs to the pseudouridine synthase Pus10 family.

It carries out the reaction uridine(54) in tRNA = pseudouridine(54) in tRNA. The enzyme catalyses uridine(55) in tRNA = pseudouridine(55) in tRNA. In terms of biological role, responsible for synthesis of pseudouridine from uracil-54 and uracil-55 in the psi GC loop of transfer RNAs. The polypeptide is tRNA pseudouridine synthase Pus10 (Methanothrix thermoacetophila (strain DSM 6194 / JCM 14653 / NBRC 101360 / PT) (Methanosaeta thermophila)).